Reading from the N-terminus, the 57-residue chain is Large ribosomal subunit protein bL32c (57 aa).

The protein belongs to the bacterial ribosomal protein bL32 family.

It localises to the plastid. The protein localises to the chloroplast. This Nandina domestica (Heavenly bamboo) protein is Large ribosomal subunit protein bL32c.